The chain runs to 394 residues: Bone morphogenetic protein 15 (394 aa).

The signal sequence occupies residues 1 to 18 (MVLLSILRILLLWGLVLF). A propeptide spanning residues 19–269 (MEHRVQMTQV…DPSLLLRRAR (251 aa)) is cleaved from the precursor. Residues Asn87 and Asn238 are each glycosylated (N-linked (GlcNAc...) asparagine). Intrachain disulfides connect Cys293–Cys359, Cys322–Cys391, and Cys326–Cys393. An N-linked (GlcNAc...) asparagine glycan is attached at Asn375.

This sequence belongs to the TGF-beta family. In terms of assembly, homodimer or heterodimer (Potential). But, in contrast to other members of this family, cannot be disulfide-linked.

Its subcellular location is the secreted. Its function is as follows. May be involved in follicular development. Seems to be an oocyte-specific growth/differentiation factor that stimulates folliculogenesis and granulosa cell (GC) growth. The chain is Bone morphogenetic protein 15 (BMP15) from Bos taurus (Bovine).